Reading from the N-terminus, the 167-residue chain is Probable chorismate pyruvate-lyase (167 aa).

The substrate site is built by Arg71, Ile110, and Glu150.

It belongs to the UbiC family.

The protein localises to the cytoplasm. It carries out the reaction chorismate = 4-hydroxybenzoate + pyruvate. It functions in the pathway cofactor biosynthesis; ubiquinone biosynthesis. In terms of biological role, removes the pyruvyl group from chorismate, with concomitant aromatization of the ring, to provide 4-hydroxybenzoate (4HB) for the ubiquinone pathway. The protein is Probable chorismate pyruvate-lyase of Acinetobacter baylyi (strain ATCC 33305 / BD413 / ADP1).